Here is an 892-residue protein sequence, read N- to C-terminus: Protein translocase subunit SecA (892 aa).

ATP is bound by residues Gln89, 107 to 111 (GEGKT), and Asp517. Residues Cys879, Cys881, Cys890, and His891 each coordinate Zn(2+).

This sequence belongs to the SecA family. In terms of assembly, monomer and homodimer. Part of the essential Sec protein translocation apparatus which comprises SecA, SecYEG and auxiliary proteins SecDF-YajC and YidC. Zn(2+) is required as a cofactor.

The protein resides in the cell inner membrane. It localises to the cytoplasm. The enzyme catalyses ATP + H2O + cellular proteinSide 1 = ADP + phosphate + cellular proteinSide 2.. Its function is as follows. Part of the Sec protein translocase complex. Interacts with the SecYEG preprotein conducting channel. Has a central role in coupling the hydrolysis of ATP to the transfer of proteins into and across the cell membrane, serving as an ATP-driven molecular motor driving the stepwise translocation of polypeptide chains across the membrane. The sequence is that of Protein translocase subunit SecA from Ruthia magnifica subsp. Calyptogena magnifica.